The following is a 483-amino-acid chain: Nucleolar protein 4 (483 aa).

Disordered regions lie at residues 210–418 and 435–483; these read QQDE…PIPS and SESR…DPQI. Over residues 211 to 225 the composition is skewed to acidic residues; sequence QDEDESSIESDEFDM. Polar residues-rich tracts occupy residues 229–254, 262–271, and 302–317; these read TRMS…TVHG, AESSNGNETL, and QPLN…QLTS. 2 stretches are compositionally biased toward basic and acidic residues: residues 319–330 and 340–350; these read FRIDDQGSDGKN and LKMEREARENG. Residues 351–363 show a composition bias toward polar residues; the sequence is SKSPAHSYSSYDS. Composition is skewed to basic and acidic residues over residues 364 to 374, 391 to 409, and 435 to 451; these read GKNESVDRGAE, HEDS…ERLK, and SESR…KAQD. The segment covering 467-483 has biased composition (polar residues); the sequence is ATYSTATVPGSQEDPQI.

It is found in the nucleus. Its subcellular location is the nucleolus. The chain is Nucleolar protein 4 (Nol4) from Mus musculus (Mouse).